A 200-amino-acid chain; its full sequence is Phospholipase A2 inhibitor gamma subunit A (200 aa).

Residues 1 to 19 form the signal peptide; the sequence is MKSLHTICLLFIFIARGNS. 8 disulfide bridges follow: Cys-22/Cys-46, Cys-25/Cys-32, Cys-39/Cys-67, Cys-73/Cys-94, Cys-95/Cys-100, Cys-118/Cys-143, Cys-136/Cys-165, and Cys-169/Cys-191. A glycan (N-linked (GlcNAc...) asparagine) is linked at Asn-176.

Belongs to the CNF-like-inhibitor family. Occurs as a mixture of oligomers. Tetrameric arrangement appears to be the predominant quaternary structure. As to expression, expressed by the liver.

The protein resides in the secreted. Its function is as follows. Inhibits the enzymatic activity of phospholipase A2 (PA2). The chain is Phospholipase A2 inhibitor gamma subunit A from Gloydius brevicaudus siniticus (Chinese mamushi).